A 1349-amino-acid chain; its full sequence is Nitric oxide synthase (1349 aa).

A disordered region spans residues 23-195 (AQQQQQQQQQ…QPRKMSQDYR (173 aa)). Low complexity-rich tracts occupy residues 24–51 (QQQQQQQQQQLQQQQQQLQQQKAQTQQQ) and 64–73 (LNGNGLLSGN). Residues 142 to 159 (SGSGSGSGGGGVGVGQGA) show a composition bias toward gly residues. Over residues 165–189 (GSCTASGKSSRELSPSPKNQQQPRK) the composition is skewed to polar residues. S250 is a (6R)-L-erythro-5,6,7,8-tetrahydrobiopterin binding site. C328 is a binding site for heme b. L-arginine-binding residues include Q391, W500, Y501, E505, and N510. (6R)-L-erythro-5,6,7,8-tetrahydrobiopterin contacts are provided by W591 and F604. Residue Y619 coordinates heme b. Residues 641–661 (PRRKFNFKQIARAVKFTSKLF) form a calmodulin-binding region. One can recognise a Flavodoxin-like domain in the interval 671-868 (ATVLYATETG…SFRKWAPEVF (198 aa)). 814 to 845 (VFALGSSAYPNFCAFGQYVDNILGELGGERLL) serves as a coordination point for FMN. The FAD-binding FR-type domain maps to 928–1167 (AKAKPHNLTR…VRSALGFHLP (240 aa)). Residues 957-968 (YEPGDHVGIFPA) and 1100-1110 (LQPRFYSISSS) contribute to the FAD site. NADP(+)-binding positions include 1175-1193 (ILIGPGTGIAPFRSFWQEF) and 1273-1287 (GHIYVCGDVTMAEHV).

Belongs to the NOS family. It depends on heme b as a cofactor. FAD serves as cofactor. FMN is required as a cofactor.

The enzyme catalyses 2 L-arginine + 3 NADPH + 4 O2 + H(+) = 2 L-citrulline + 2 nitric oxide + 3 NADP(+) + 4 H2O. Its activity is regulated as follows. Stimulated by calcium/calmodulin. In terms of biological role, catalyzes the conversion of L-arginine to L-citrulline producing nitric oxide (NO) which is a messenger molecule with diverse functions throughout the body. Truncated isoforms (isoform 3-isoform 6) are able to form intracellular complexes with the full-length protein and serve as dominant negative inhibitors of the enzyme activity. This chain is Nitric oxide synthase (Nos), found in Drosophila melanogaster (Fruit fly).